Consider the following 884-residue polypeptide: Translation initiation factor IF-2 (884 aa).

The segment at 93–288 (VNTPEAEQAK…KGKRKPSTLQ (196 aa)) is disordered. Over residues 99 to 209 (EQAKAEEQAQ…KMAAENEGKW (111 aa)) the composition is skewed to basic and acidic residues. The segment covering 216-229 (QTESADYHVTTSQH) has biased composition (polar residues). Residues 231 to 246 (RAAEDENDAKVEGDRR) show a composition bias toward basic and acidic residues. Basic residues predominate over residues 247-261 (SRTRGGKATKQKKGN). Residues 262–275 (KLSESKADREEARA) are compositionally biased toward basic and acidic residues. The tr-type G domain occupies 383 to 552 (HRAPVVTIMG…LLQAEVLELK (170 aa)). The interval 392–399 (GHVDHGKT) is G1. Position 392–399 (392–399 (GHVDHGKT)) interacts with GTP. The G2 stretch occupies residues 417–421 (GITQH). A G3 region spans residues 438–441 (DTPG). Residues 438 to 442 (DTPGH) and 492 to 495 (NKID) each bind GTP. Residues 492 to 495 (NKID) are G4. The tract at residues 528 to 530 (SAK) is G5.

This sequence belongs to the TRAFAC class translation factor GTPase superfamily. Classic translation factor GTPase family. IF-2 subfamily.

Its subcellular location is the cytoplasm. Functionally, one of the essential components for the initiation of protein synthesis. Protects formylmethionyl-tRNA from spontaneous hydrolysis and promotes its binding to the 30S ribosomal subunits. Also involved in the hydrolysis of GTP during the formation of the 70S ribosomal complex. The sequence is that of Translation initiation factor IF-2 from Yersinia pestis bv. Antiqua (strain Antiqua).